A 113-amino-acid polypeptide reads, in one-letter code: uncharacterized protein (113 aa).

This sequence belongs to the ycf68 family.

The protein localises to the plastid. It localises to the chloroplast. This is an uncharacterized protein from Eucalyptus globulus subsp. globulus (Tasmanian blue gum).